A 547-amino-acid polypeptide reads, in one-letter code: MSELTELPAWQALWDHFAEAKHLHMRDLFAADPGRAERYSLEVGGLFLDYSKNRITDATLLGLMELAREAGLPARIKAMFKGEKINRTENRAVLHVALRNRTNSPIRVDGEDVMPKVNSVLERMGKFAHAVRSGDWLGFTNQPITDIVNIGIGGSDLGPLMVCSALKPFGHPRLNMHFVSNVDGAQLKETLKKVHPETTLFVVESKTFTTQETLTNALTAREWFLSHARDEGAVAKHFVAVSTNQKAVAEFGIDPANMFEFWNWVGGRYSLWSAIGLPIMLYLGEENFTELLNGAHIMDQHFMNAPFEQNMPVLLAMIGVWYINYYGGGSHVIAPYDQYLHRLPAFIQQLDMESNGKQVTLSGQPVDFETAPIIWGETGINGQHAFFQLLHQGTHISPIDLIASLGNRASLPGHHEILLANVFAQAEAFMRGKTADEVRAELAEQGLSGEEMEALVPHKVFGGNRPTNTLLMSRLDPRNLGSLIALYEHKIFVQGVIWHINSFDQWGVELGKQLAKTIHAELTGKLEQAEHDSSTRRLIQLYRKANG.

Residue Glu-353 is the Proton donor of the active site. Active-site residues include His-384 and Lys-512.

This sequence belongs to the GPI family.

It localises to the cytoplasm. The enzyme catalyses alpha-D-glucose 6-phosphate = beta-D-fructose 6-phosphate. It functions in the pathway carbohydrate biosynthesis; gluconeogenesis. It participates in carbohydrate degradation; glycolysis; D-glyceraldehyde 3-phosphate and glycerone phosphate from D-glucose: step 2/4. Its function is as follows. Catalyzes the reversible isomerization of glucose-6-phosphate to fructose-6-phosphate. The polypeptide is Glucose-6-phosphate isomerase 1 (Chromobacterium violaceum (strain ATCC 12472 / DSM 30191 / JCM 1249 / CCUG 213 / NBRC 12614 / NCIMB 9131 / NCTC 9757 / MK)).